Here is a 213-residue protein sequence, read N- to C-terminus: GTP-binding protein YPTC4 (213 aa).

13–21 (GDTGVGKSC) serves as a coordination point for GTP. The Effector region motif lies at 35 to 43 (HDLTIGVEF). GTP contacts are provided by residues 61 to 65 (DTAGQ), 119 to 122 (NKCD), and 149 to 151 (SAR). Residues 194–213 (AGPQTVKPGEGGAAKSSSCC) are disordered. S-geranylgeranyl cysteine attachment occurs at residues Cys-212 and Cys-213.

This sequence belongs to the small GTPase superfamily. Rab family.

The protein resides in the cell membrane. Functionally, protein transport. Probably involved in vesicular traffic. In Chlamydomonas reinhardtii (Chlamydomonas smithii), this protein is GTP-binding protein YPTC4 (YPTC4).